The primary structure comprises 1617 residues: Mitogen-activated protein kinase kinae kinase bck1 (1617 aa).

9 disordered regions span residues 1-73 (MDGQ…SQLQ), 167-199 (GPVHHLYESSGGDGSAYKRDGTVPPTPSARTMP), 211-253 (SVAS…GGMS), 345-399 (RQIH…SPNL), 455-555 (DHRR…SSSY), 568-633 (KRSK…LRGK), 739-820 (GVPL…ISPE), 832-1144 (EHKR…RGDI), and 1165-1277 (IDLD…EILR). Positions 19–28 (TQPSQSHMLS) are enriched in low complexity. A compositionally biased stretch (pro residues) spans 44 to 60 (VMPPPPPGPPPGPPPGP). Over residues 220–248 (TAQNHQSQTGQTNEPTKSPSHRQNNSNTL) the composition is skewed to polar residues. Positions 482–504 (KSGSPATQHATLNQGLSSSSTGD) are enriched in polar residues. Positions 524–533 (RYYESRKGQE) are enriched in basic and acidic residues. 2 stretches are compositionally biased toward polar residues: residues 535–555 (IRPSPQEMCSRQWTGETSSSY) and 586–596 (ESPTSPVNLRQ). 2 stretches are compositionally biased toward basic and acidic residues: residues 832–841 (EHKREVERKQ) and 871–885 (FDERRVSPYEDKKAD). Polar residues-rich tracts occupy residues 897–907 (PQESYTLTRIN) and 956–980 (GGKQTNFGSFGSPTQGNTKSAPQSS). 2 stretches are compositionally biased toward basic and acidic residues: residues 1128 to 1140 (EDERPTPRRDSFA) and 1189 to 1198 (PENDLHKKEN). Polar residues-rich tracts occupy residues 1199-1208 (QPSSSYTGEM) and 1257-1272 (NQASRSRSIHTGNQKS). The Protein kinase domain occupies 1323–1596 (IIRGQLIGKG…QTLLTRHPFC (274 aa)). Residues 1329 to 1337 (IGKGTYGRV) and Lys1352 each bind ATP.

Belongs to the protein kinase superfamily. STE Ser/Thr protein kinase family. MAP kinase kinase kinase subfamily.

The enzyme catalyses L-seryl-[protein] + ATP = O-phospho-L-seryl-[protein] + ADP + H(+). The catalysed reaction is L-threonyl-[protein] + ATP = O-phospho-L-threonyl-[protein] + ADP + H(+). Its function is as follows. Mitogen-activated protein kinase kinase kinase; part of cell wall integrity (CWI) signaling pathway composed of pkcA, the bck1-mkk2-mpka MAPK cascade and the downstream rlmA transcription regulator. The CWI signaling pathway regulates cell wall integrity and pyomelanin formation. CWI also controls oxidative stress response, gliotoxin production, iron adaptation and asexual development. Finally, CWI is constitutively required for A.fumigatus to cope with the temperature increase found in the mammalian lung environment, during infection. The sequence is that of Mitogen-activated protein kinase kinae kinase bck1 from Aspergillus fumigatus (strain ATCC MYA-4609 / CBS 101355 / FGSC A1100 / Af293) (Neosartorya fumigata).